The sequence spans 557 residues: Polypyrimidine tract-binding protein 1 (557 aa).

Met-1 carries the N-acetylmethionine modification. Position 16 is a phosphoserine (Ser-16). RRM domains follow at residues Arg-59–Asn-143, Leu-184–Leu-260, and Ser-363–His-437. A Glycyl lysine isopeptide (Lys-Gly) (interchain with G-Cter in SUMO2) cross-link involves residue Lys-65. At Tyr-127 the chain carries Phosphotyrosine. Position 138 is a phosphothreonine (Thr-138). Ser-141 is modified (phosphoserine). A Glycyl lysine isopeptide (Lys-Gly) (interchain with G-Cter in SUMO2) cross-link involves residue Lys-218. Position 459 is a phosphoserine (Ser-459). The RRM 4 domain occupies Ala-480–Ser-555.

Monomer. Part of a ternary complex containing KHSRP, PTBP1, PTBP2 and HNRPH1. Interacts with RAVER1 and SFPQ. Interacts with IVNS1ABP (via BACK domain); the interaction is direct.

The protein resides in the nucleus. Its function is as follows. Plays a role in pre-mRNA splicing and in the regulation of alternative splicing events. Activates exon skipping of its own pre-mRNA during muscle cell differentiation. Binds to the polypyrimidine tract of introns. May promote RNA looping when bound to two separate polypyrimidine tracts in the same pre-mRNA. May promote the binding of U2 snRNP to pre-mRNA. Cooperates with RAVER1 to modulate switching between mutually exclusive exons during maturation of the TPM1 pre-mRNA. Represses the splicing of MAPT/Tau exon 10. Binds to polypyrimidine-rich controlling element (PCE) of CFTR and promotes exon skipping of CFTR exon 9, thereby antagonizing TIA1 and its role in exon inclusion of CFTR exon 9. Plays a role in the splicing of pyruvate kinase PKM by binding repressively to a polypyrimidine tract flanking PKM exon 9, inhibiting exon 9 inclusion and resulting in exon 10 inclusion and production of the PKM M2 isoform. In case of infection by picornaviruses, binds to the viral internal ribosome entry site (IRES) and stimulates the IRES-mediated translation. This chain is Polypyrimidine tract-binding protein 1 (PTBP1), found in Homo sapiens (Human).